A 446-amino-acid chain; its full sequence is Exodeoxyribonuclease 7 large subunit (446 aa).

It belongs to the XseA family. In terms of assembly, heterooligomer composed of large and small subunits.

It localises to the cytoplasm. The catalysed reaction is Exonucleolytic cleavage in either 5'- to 3'- or 3'- to 5'-direction to yield nucleoside 5'-phosphates.. In terms of biological role, bidirectionally degrades single-stranded DNA into large acid-insoluble oligonucleotides, which are then degraded further into small acid-soluble oligonucleotides. The polypeptide is Exodeoxyribonuclease 7 large subunit (Streptococcus pneumoniae (strain Taiwan19F-14)).